Reading from the N-terminus, the 392-residue chain is Lipid-A-disaccharide synthase (392 aa).

Belongs to the LpxB family.

The enzyme catalyses a lipid X + a UDP-2-N,3-O-bis[(3R)-3-hydroxyacyl]-alpha-D-glucosamine = a lipid A disaccharide + UDP + H(+). It functions in the pathway bacterial outer membrane biogenesis; LPS lipid A biosynthesis. In terms of biological role, condensation of UDP-2,3-diacylglucosamine and 2,3-diacylglucosamine-1-phosphate to form lipid A disaccharide, a precursor of lipid A, a phosphorylated glycolipid that anchors the lipopolysaccharide to the outer membrane of the cell. This is Lipid-A-disaccharide synthase from Prochlorococcus marinus (strain MIT 9313).